Consider the following 180-residue polypeptide: ATP synthase subunit b (180 aa).

The chain crosses the membrane as a helical span at residues 15–35; that stretch reads LIPEVPELVIGLLAFAIVFFV.

It belongs to the ATPase B chain family. In terms of assembly, F-type ATPases have 2 components, F(1) - the catalytic core - and F(0) - the membrane proton channel. F(1) has five subunits: alpha(3), beta(3), gamma(1), delta(1), epsilon(1). F(0) has three main subunits: a(1), b(2) and c(10-14). The alpha and beta chains form an alternating ring which encloses part of the gamma chain. F(1) is attached to F(0) by a central stalk formed by the gamma and epsilon chains, while a peripheral stalk is formed by the delta and b chains.

It is found in the cell membrane. Its function is as follows. F(1)F(0) ATP synthase produces ATP from ADP in the presence of a proton or sodium gradient. F-type ATPases consist of two structural domains, F(1) containing the extramembraneous catalytic core and F(0) containing the membrane proton channel, linked together by a central stalk and a peripheral stalk. During catalysis, ATP synthesis in the catalytic domain of F(1) is coupled via a rotary mechanism of the central stalk subunits to proton translocation. In terms of biological role, component of the F(0) channel, it forms part of the peripheral stalk, linking F(1) to F(0). The polypeptide is ATP synthase subunit b (Streptomyces avermitilis (strain ATCC 31267 / DSM 46492 / JCM 5070 / NBRC 14893 / NCIMB 12804 / NRRL 8165 / MA-4680)).